The chain runs to 49 residues: Large ribosomal subunit protein uL16 (49 aa).

Belongs to the universal ribosomal protein uL16 family. As to quaternary structure, part of the 50S ribosomal subunit.

Its function is as follows. Binds 23S rRNA and is also seen to make contacts with the A and possibly P site tRNAs. This is Large ribosomal subunit protein uL16 (rplP) from Aquifex pyrophilus.